The primary structure comprises 599 residues: Kinesin light chain 2 (599 aa).

Residues I78–I143 are a coiled coil. Residues E154 to L163 are compositionally biased toward basic and acidic residues. A disordered region spans residues E154 to H188. A phosphoserine mark is found at S174 and S178. 5 TPR repeats span residues L197–T230, A239–T272, A281–V314, A323–R356, and A365–K398. S443 carries the phosphoserine modification. The TPR 6 repeat unit spans residues N447–G480. Residues L492 to G541 form a disordered region. Phosphoserine is present on residues S505 and S515. The span at G532–G541 shows a compositional bias: low complexity. Phosphoserine is present on residues S574, S575, and S582.

Belongs to the kinesin light chain family. As to quaternary structure, oligomeric complex composed of two heavy chains and two light chains. Interacts (via TPR repeats) with PLEKHM2.

The protein resides in the cytoplasm. It localises to the cytoskeleton. It is found in the lysosome membrane. Kinesin is a microtubule-associated force-producing protein that plays a role in organelle transport. The light chain functions in coupling of cargo to the heavy chain or in the modulation of its ATPase activity. Through binding with PLEKHM2 and ARL8B, recruits kinesin-1 to lysosomes and hence direct lysosomes movement toward microtubule plus ends. The chain is Kinesin light chain 2 from Mus musculus (Mouse).